We begin with the raw amino-acid sequence, 187 residues long: Elongation factor P (187 aa).

Belongs to the elongation factor P family.

It is found in the cytoplasm. Its pathway is protein biosynthesis; polypeptide chain elongation. Involved in peptide bond synthesis. Stimulates efficient translation and peptide-bond synthesis on native or reconstituted 70S ribosomes in vitro. Probably functions indirectly by altering the affinity of the ribosome for aminoacyl-tRNA, thus increasing their reactivity as acceptors for peptidyl transferase. The chain is Elongation factor P from Mycolicibacterium vanbaalenii (strain DSM 7251 / JCM 13017 / BCRC 16820 / KCTC 9966 / NRRL B-24157 / PYR-1) (Mycobacterium vanbaalenii).